Reading from the N-terminus, the 289-residue chain is Probable branched-chain-amino-acid aminotransferase (289 aa).

K154 carries the post-translational modification N6-(pyridoxal phosphate)lysine.

It belongs to the class-IV pyridoxal-phosphate-dependent aminotransferase family. Requires pyridoxal 5'-phosphate as cofactor.

The catalysed reaction is L-leucine + 2-oxoglutarate = 4-methyl-2-oxopentanoate + L-glutamate. The enzyme catalyses L-isoleucine + 2-oxoglutarate = (S)-3-methyl-2-oxopentanoate + L-glutamate. It catalyses the reaction L-valine + 2-oxoglutarate = 3-methyl-2-oxobutanoate + L-glutamate. Its pathway is amino-acid biosynthesis; L-isoleucine biosynthesis; L-isoleucine from 2-oxobutanoate: step 4/4. The protein operates within amino-acid biosynthesis; L-leucine biosynthesis; L-leucine from 3-methyl-2-oxobutanoate: step 4/4. It participates in amino-acid biosynthesis; L-valine biosynthesis; L-valine from pyruvate: step 4/4. In terms of biological role, acts on leucine, isoleucine and valine. This Rickettsia bellii (strain RML369-C) protein is Probable branched-chain-amino-acid aminotransferase (ilvE).